We begin with the raw amino-acid sequence, 735 residues long: Alpha-adducin (735 aa).

M1 is subject to N-acetylmethionine. Residues 1–11 (MNGDTRAAVVT) are compositionally biased toward low complexity. The segment at 1 to 21 (MNGDTRAAVVTSPPPTTAPHK) is disordered. A phosphoserine mark is found at S12, S59, and S64. T331 is subject to Phosphothreonine. Residues S334, S353, and S355 each carry the phosphoserine modification. A Phosphothreonine modification is found at T358. Phosphoserine is present on residues S364, S366, S408, and S427. 2 disordered regions span residues 418–487 (GHSF…AVPN) and 576–735 (RREV…KSDS). Position 429 is a phosphothreonine (T429). 2 positions are modified to phosphoserine: S431 and S436. The segment covering 440 to 455 (QQREKTRWLHSGRGDD) has biased composition (basic and acidic residues). Phosphothreonine; by ROCK2 is present on T445. Phosphoserine occurs at positions 464 and 465. Phosphothreonine; by ROCK2 is present on T480. S481 is modified (phosphoserine; by PKA). The span at 576-601 (RREVERKQKGSEENLDETREQKEKSP) shows a compositional bias: basic and acidic residues. Residues S586, S600, and S605 each carry the phosphoserine modification. At T610 the chain carries Phosphothreonine. The residue at position 613 (S613) is a Phosphoserine. T614 bears the Phosphothreonine mark. The span at 698-712 (GSPMDPGSDGSPGKS) shows a compositional bias: low complexity. Phosphoserine is present on residues S705, S708, and S712. Basic residues predominate over residues 713-735 (PSKKKKKFRTPSFLKKSKKKSDS). S714 is modified (phosphoserine; by PKC). The segment at 715-732 (KKKKKFRTPSFLKKSKKK) is interaction with calmodulin. Position 724 is a phosphoserine; by PKA and PKC (S724).

It belongs to the aldolase class II family. Adducin subfamily. As to quaternary structure, heterodimer of an alpha and a beta subunit or an alpha and a gamma subunit.

It is found in the cytoplasm. The protein resides in the cytoskeleton. It localises to the cell membrane. Functionally, membrane-cytoskeleton-associated protein that promotes the assembly of the spectrin-actin network. Binds to calmodulin. The chain is Alpha-adducin (Add1) from Mus musculus (Mouse).